The primary structure comprises 109 residues: Large ribosomal subunit protein uL1 (109 aa).

The protein belongs to the universal ribosomal protein uL1 family. As to quaternary structure, part of the 50S ribosomal subunit.

Its function is as follows. Binds directly to 23S rRNA. The L1 stalk is quite mobile in the ribosome, and is involved in E site tRNA release. Functionally, protein L1 is also a translational repressor protein, it controls the translation of the L11 operon by binding to its mRNA. This is Large ribosomal subunit protein uL1 (rplA) from Aquifex pyrophilus.